We begin with the raw amino-acid sequence, 89 residues long: Large ribosomal subunit protein bL28 (89 aa).

Belongs to the bacterial ribosomal protein bL28 family.

In Chlamydia trachomatis serovar L2 (strain ATCC VR-902B / DSM 19102 / 434/Bu), this protein is Large ribosomal subunit protein bL28.